The primary structure comprises 314 residues: uncharacterized protein (314 aa).

The first 24 residues, 1–24 (MKRRRRWRGWLLFPALCFCLLCEA), serve as a signal peptide directing secretion. 14 N-linked (GlcNAc...) asparagine; by host glycosylation sites follow: N28, N43, N57, N77, N101, N102, N109, N151, N170, N217, N223, N252, N255, and N268. Residues 47 to 114 (ATTGTTTTSP…TIGTNATSPS (68 aa)) show a composition bias toward low complexity. Residues 47–116 (ATTGTTTTSP…GTNATSPSPS (70 aa)) form a disordered region.

It belongs to the HHV-5 UL116 protein family. Interacts with gH. Interacts with UL148. Highly glycosylated.

The protein localises to the virion. Its subcellular location is the host endoplasmic reticulum. Functionally, chaperone protein that cooperates with UL148 to regulate the abundance of gH complexes in virion. First interactor of gH in the host endoplasmic reticulum, regulates the early folding steps of virion assembly. Then, UL148 is recruited and favors the binding of gL. This is an uncharacterized protein from Homo sapiens (Human).